The following is a 597-amino-acid chain: Protein unc-93 homolog B1 (597 aa).

A disordered region spans residues 1–29 (MEAEPPLYPMAGAAGPQGDEDLLGVPDGP). Helical transmembrane passes span 64 to 84 (VLAASAGGMLTYGVYLGLLQM), 110 to 130 (KMLMGINVTPIAALLYTPVLI), 132 to 152 (FFGTKWMMFLAVGIYALFVST), 160 to 180 (TLVPSAVALGMAIVPLWASMG), and 223 to 243 (IFYSFFHLSFACAQLPMIYFL). N-linked (GlcNAc...) asparagine glycosylation is found at N251 and N272. Transmembrane regions (helical) follow at residues 285–305 (LIVVESVLMAVAFLAMLLVLG), 343–363 (LVPFFIYSGFEVLFACTGIAL), 378–398 (LLVAYSLGASAASLLGLLGLW), 403–423 (VPLVAGAGVHLLLTFILFFWA), and 428–448 (VLQHSWILYVAAALWGVGSAL). N-linked (GlcNAc...) asparagine glycosylation is present at N449. 2 consecutive transmembrane segments (helical) span residues 469–489 (FIFTIYHWWQAVAIFTVYLGS) and 491–511 (LHMKAKLAVLLVTLVAAAVSY). Residues 522-597 (VAPRQPRIPR…AQGGDGPEEQ (76 aa)) form a disordered region. 2 positions are modified to phosphoserine: S547 and S550.

It belongs to the unc-93 family. Interacts with TLR3, TLR5, TLR7, and TLR9 (probably via transmembrane domain). Post-translationally, N-glycosylated. In terms of tissue distribution, expressed in plasmocytoid dendritic cells (at protein level). Highly expressed in antigen-presenting cells. Expressed in heart, and at lower level in kidney. Expressed at low level in other tissues.

The protein localises to the endoplasmic reticulum membrane. It localises to the endosome. Its subcellular location is the lysosome. The protein resides in the cytoplasmic vesicle. It is found in the phagosome. In terms of biological role, plays an important role in innate and adaptive immunity by regulating nucleotide-sensing Toll-like receptor (TLR) signaling. Required for the transport of a subset of TLRs (including TLR3, TLR7 and TLR9) from the endoplasmic reticulum to endolysosomes where they can engage pathogen nucleotides and activate signaling cascades. May play a role in autoreactive B-cells removal. The polypeptide is Protein unc-93 homolog B1 (Homo sapiens (Human)).